The chain runs to 154 residues: 6,7-dimethyl-8-ribityllumazine synthase (154 aa).

5-amino-6-(D-ribitylamino)uracil is bound by residues Phe22, 57–59 (AYE), and 81–83 (AVI). Position 86 to 87 (86 to 87 (GT)) interacts with (2S)-2-hydroxy-3-oxobutyl phosphate. The active-site Proton donor is the His89. Residue Phe114 coordinates 5-amino-6-(D-ribitylamino)uracil. Arg128 serves as a coordination point for (2S)-2-hydroxy-3-oxobutyl phosphate.

Belongs to the DMRL synthase family. Forms an icosahedral capsid composed of 60 subunits, arranged as a dodecamer of pentamers.

The catalysed reaction is (2S)-2-hydroxy-3-oxobutyl phosphate + 5-amino-6-(D-ribitylamino)uracil = 6,7-dimethyl-8-(1-D-ribityl)lumazine + phosphate + 2 H2O + H(+). It functions in the pathway cofactor biosynthesis; riboflavin biosynthesis; riboflavin from 2-hydroxy-3-oxobutyl phosphate and 5-amino-6-(D-ribitylamino)uracil: step 1/2. Its function is as follows. Catalyzes the formation of 6,7-dimethyl-8-ribityllumazine by condensation of 5-amino-6-(D-ribitylamino)uracil with 3,4-dihydroxy-2-butanone 4-phosphate. This is the penultimate step in the biosynthesis of riboflavin. The protein is 6,7-dimethyl-8-ribityllumazine synthase of Idiomarina loihiensis (strain ATCC BAA-735 / DSM 15497 / L2-TR).